A 251-amino-acid chain; its full sequence is Regulator of G-protein signaling 9-binding protein B (251 aa).

Over 1-230 (MPLQNVKVAD…NSKGCCSDGQ (230 aa)) the chain is Cytoplasmic. 2 coiled-coil regions span residues 52-94 (HLRD…ELER) and 158-187 (ANKA…MKVN). Residues 231-250 (LIVFLLLCGTALVAITLYSI) traverse the membrane as a helical; Anchor for type IV membrane protein segment. Residue Leu-251 is a topological domain, extracellular.

The protein belongs to the RGS7BP/RGS9BP family.

It localises to the membrane. Its function is as follows. Regulator of G protein-coupled receptor (GPCR) signaling. Probably acts by regulating the activity of some 'R7' family protein (RGS6, RGS7, RGS9 and/or RGS11). The sequence is that of Regulator of G-protein signaling 9-binding protein B (rgs9bp-b) from Xenopus laevis (African clawed frog).